We begin with the raw amino-acid sequence, 62 residues long: Short neurotoxin C (62 aa).

The segment covering 1–16 (RRCFNQQSSQPQTNKS) has biased composition (polar residues). A disordered region spans residues 1 to 22 (RRCFNQQSSQPQTNKSCPPGEN). 4 disulfides stabilise this stretch: Cys-3/Cys-24, Cys-17/Cys-41, Cys-43/Cys-54, and Cys-55/Cys-60.

This sequence belongs to the three-finger toxin family. Short-chain subfamily. Type I alpha-neurotoxin sub-subfamily. Expressed by the venom gland.

It localises to the secreted. Functionally, binds to muscle nicotinic acetylcholine receptor (nAChR) and inhibit acetylcholine from binding to the receptor, thereby impairing neuromuscular transmission. The chain is Short neurotoxin C from Laticauda laticaudata (Blue-ringed sea krait).